We begin with the raw amino-acid sequence, 727 residues long: Elongation factor 2 (727 aa).

A tr-type G domain is found at 19 to 260; that stretch reads DQIRNMGICA…MSIKHLPNPL (242 aa). Residues 28 to 35, 94 to 98, and 148 to 151 contribute to the GTP site; these read AHIDHGKT, DTPGH, and NKVD. Position 603 is a diphthamide (H603).

It belongs to the TRAFAC class translation factor GTPase superfamily. Classic translation factor GTPase family. EF-G/EF-2 subfamily.

The protein resides in the cytoplasm. Catalyzes the GTP-dependent ribosomal translocation step during translation elongation. During this step, the ribosome changes from the pre-translocational (PRE) to the post-translocational (POST) state as the newly formed A-site-bound peptidyl-tRNA and P-site-bound deacylated tRNA move to the P and E sites, respectively. Catalyzes the coordinated movement of the two tRNA molecules, the mRNA and conformational changes in the ribosome. The chain is Elongation factor 2 from Methanococcus maripaludis (strain C5 / ATCC BAA-1333).